The chain runs to 67 residues: DNA-directed RNA polymerase subunit omega (67 aa).

The protein belongs to the RNA polymerase subunit omega family. The RNAP catalytic core consists of 2 alpha, 1 beta, 1 beta' and 1 omega subunit. When a sigma factor is associated with the core the holoenzyme is formed, which can initiate transcription.

The catalysed reaction is RNA(n) + a ribonucleoside 5'-triphosphate = RNA(n+1) + diphosphate. Promotes RNA polymerase assembly. Latches the N- and C-terminal regions of the beta' subunit thereby facilitating its interaction with the beta and alpha subunits. The sequence is that of DNA-directed RNA polymerase subunit omega from Polynucleobacter asymbioticus (strain DSM 18221 / CIP 109841 / QLW-P1DMWA-1) (Polynucleobacter necessarius subsp. asymbioticus).